We begin with the raw amino-acid sequence, 351 residues long: Ion-translocating oxidoreductase complex subunit D (351 aa).

Transmembrane regions (helical) follow at residues 20–40 (IMLLVILACLPGMLAQVYFFG), 44–64 (LIQVGLASATALIAEGVTLSL), 89–109 (LPPLAPWWMVVMATVFAIIIA), and 123–143 (PAMIGYVVLLISFPVQMTSWL). Threonine 187 is modified (FMN phosphoryl threonine). 5 helical membrane passes run 215–235 (LSGIGWQWVNIGFLIGGLFLL), 244–264 (IPVSFLLSLMFCASLSWVIAP), 267–287 (FAPPMLHLLSGATMLGAFFIA), 301–321 (LIFGALIGLLVWLIRTYGGYP), and 322–342 (DGVAFAVLLANITVPLIDYYT).

This sequence belongs to the NqrB/RnfD family. As to quaternary structure, the complex is composed of six subunits: RnfA, RnfB, RnfC, RnfD, RnfE and RnfG. Requires FMN as cofactor.

It localises to the cell inner membrane. In terms of biological role, part of a membrane-bound complex that couples electron transfer with translocation of ions across the membrane. This Pectobacterium carotovorum subsp. carotovorum (strain PC1) protein is Ion-translocating oxidoreductase complex subunit D.